A 408-amino-acid polypeptide reads, in one-letter code: MDHMISENGETSAEGSICGYDSLHQLLSANLKPELYQEVNRLLLGRNCGRSLEQIVLPESAKALSSKHDFDLQAASFSADKEQMRNPRVVRVGLIQNSIALPTTAPFSDQTRGIFDKLKPIIDAAGVAGVNILCLQEAWTMPFAFCTRERRWCEFAEPVDGESTKFLQELAKKYNMVIVSPILERDIDHGEVLWNTAVIIGNNGNIIGKHRKNHIPRVGDFNESTYYMEGDTGHPVFETVFGKIAVNICYGRHHPLNWLAFGLNGAEIVFNPSATVGELSEPMWPIEARNAAIANSYFVGSINRVGTEVFPNPFTSGDGKPQHNDFGHFYGSSHFSAPDASCTPSLSRYKDGLLISDMDLNLCRQYKDKWGFRMTARYEVYADLLAKYIKPDFKPQVVSDPLLHKNST.

Positions Val90–Leu360 constitute a CN hydrolase domain. Glu137 acts as the Proton acceptor in catalysis. The active-site Proton donor is Lys212. The Nucleophile role is filled by Cys249.

This sequence belongs to the carbon-nitrogen hydrolase superfamily. BUP family. In terms of assembly, homodimer, homotetramer, homooctamer; can also form higher homooligomers.

The protein localises to the cytoplasm. It carries out the reaction 3-(carbamoylamino)propanoate + H2O + 2 H(+) = beta-alanine + NH4(+) + CO2. It catalyses the reaction 3-(carbamoylamino)-2-methylpropanoate + H2O + 2 H(+) = (R)-3-amino-2-methylpropanoate + NH4(+) + CO2. It participates in amino-acid biosynthesis; beta-alanine biosynthesis. In terms of biological role, catalyzes a late step in pyrimidine degradation. Converts N-carbamoyl-beta-aminoisobutyrate and N-carbamoyl-beta-alanine (3-ureidopropanoate) to, respectively, beta-aminoisobutyrate and beta-alanine, ammonia and carbon dioxide. Involved in the recycling of nitrogen from nucleobases to general nitrogen metabolism. This is Beta-ureidopropionase from Arabidopsis thaliana (Mouse-ear cress).